A 218-amino-acid chain; its full sequence is Trimethylamine corrinoid protein 2 (218 aa).

Residues 1–92 (MAGKEEIIAK…EMEKRKSQTK (92 aa)) enclose the B12-binding N-terminal domain. The 125-residue stretch at 94 to 218 (LGTVIIGTIE…AKVKAALKVG (125 aa)) folds into the B12-binding domain. His-107 serves as a coordination point for methylcob(III)alamin.

The protein belongs to the methylamine corrinoid protein family. In terms of assembly, can form a complex with MttB.

The protein operates within one-carbon metabolism; methanogenesis from trimethylamine. Functionally, acts probably as a methyl group carrier between MttB and either MtbA or MtaA. This chain is Trimethylamine corrinoid protein 2 (mttC2), found in Methanosarcina mazei (strain ATCC BAA-159 / DSM 3647 / Goe1 / Go1 / JCM 11833 / OCM 88) (Methanosarcina frisia).